The primary structure comprises 253 residues: Phosphate import ATP-binding protein PstB (253 aa).

The ABC transporter domain maps to 1 to 249; that stretch reads MKLMDVRVSG…PRHELTKKFL (249 aa). 38 to 45 provides a ligand contact to ATP; sequence GPSGSGKS.

It belongs to the ABC transporter superfamily. Phosphate importer (TC 3.A.1.7) family. In terms of assembly, the complex is composed of two ATP-binding proteins (PstB), two transmembrane proteins (PstC and PstA) and a solute-binding protein (PstS).

Its subcellular location is the cell membrane. It catalyses the reaction phosphate(out) + ATP + H2O = ADP + 2 phosphate(in) + H(+). Part of the ABC transporter complex PstSACB involved in phosphate import. Responsible for energy coupling to the transport system. This Aeropyrum pernix (strain ATCC 700893 / DSM 11879 / JCM 9820 / NBRC 100138 / K1) protein is Phosphate import ATP-binding protein PstB.